We begin with the raw amino-acid sequence, 233 residues long: Fibrillarin-like rRNA/tRNA 2'-O-methyltransferase (233 aa).

S-adenosyl-L-methionine-binding positions include 89 to 90 (TT), 108 to 109 (EF), 133 to 134 (DA), and 153 to 156 (DIAQ).

Belongs to the methyltransferase superfamily. Fibrillarin family. As to quaternary structure, interacts with nop5. Component of box C/D small ribonucleoprotein (sRNP) particles that contain rpl7ae, FlpA and nop5, plus a guide RNA.

Involved in pre-rRNA and tRNA processing. Utilizes the methyl donor S-adenosyl-L-methionine to catalyze the site-specific 2'-hydroxyl methylation of ribose moieties in rRNA and tRNA. Site specificity is provided by a guide RNA that base pairs with the substrate. Methylation occurs at a characteristic distance from the sequence involved in base pairing with the guide RNA. The sequence is that of Fibrillarin-like rRNA/tRNA 2'-O-methyltransferase from Sulfurisphaera tokodaii (strain DSM 16993 / JCM 10545 / NBRC 100140 / 7) (Sulfolobus tokodaii).